Reading from the N-terminus, the 247-residue chain is Capsid protein (247 aa).

The segment at 1-40 is DNA-binding; that stretch reads MWGTSNCACAKFQIRRRYARPYRRRHIRRYRRRRRHFRRR. The segment at 15–44 is nuclear localization signals; that stretch reads RRRYARPYRRRHIRRYRRRRRHFRRRRFTT.

It belongs to the circoviridae capsid protein family. As to quaternary structure, homomultimer. Assembles in the nucleus, presumably in an immature form, then migrates to the cytoplasm once assembled as mature virion. Interacts with Rep; this interaction relocates Rep into the nucleus.

It localises to the host nucleus. It is found in the virion. Its function is as follows. Self-assembles to form the virion icosahedral capsid with a T=1 symmetry. This very small capsid (17 - 22 nm in diameter) allows the virus to be very stable in the environment and resistant to some disinfectants, including detergents. Essential for the initial attachment to heparan sulfate moieties and chondroitin sulfate B of the host cell surface proteoglycans. After attachment, the virus is endocytosed and traffics to the nucleus. The capsid protein binds and transports the viral genome and Rep across the nuclear envelope. In Beak and feather disease virus (BFDV), this protein is Capsid protein (Cap).